A 435-amino-acid chain; its full sequence is Enolase (435 aa).

Q163 lines the (2R)-2-phosphoglycerate pocket. The active-site Proton donor is E205. The Mg(2+) site is built by D243, E292, and D319. Positions 344, 373, 374, and 395 each coordinate (2R)-2-phosphoglycerate. K344 (proton acceptor) is an active-site residue.

The protein belongs to the enolase family. Requires Mg(2+) as cofactor.

It localises to the cytoplasm. The protein localises to the secreted. It is found in the cell surface. The enzyme catalyses (2R)-2-phosphoglycerate = phosphoenolpyruvate + H2O. It functions in the pathway carbohydrate degradation; glycolysis; pyruvate from D-glyceraldehyde 3-phosphate: step 4/5. Functionally, catalyzes the reversible conversion of 2-phosphoglycerate (2-PG) into phosphoenolpyruvate (PEP). It is essential for the degradation of carbohydrates via glycolysis. The sequence is that of Enolase from Streptococcus pyogenes serotype M12 (strain MGAS2096).